The sequence spans 111 residues: MSEELLSQEEIEFLMETLEKKKVEKIPQGLQPFDFDSLEKISSERYPRLEQFLSTFTERLSEELKKITLSNLKVKVKEKDVKPLSKILPNLSPPVVFIRQHLEEVGDFTHC.

This is an uncharacterized protein from Aquifex aeolicus (strain VF5).